The sequence spans 718 residues: uncharacterized protein (718 aa).

Transmembrane regions (helical) follow at residues 9-29, 60-80, 83-103, 136-156, 391-411, and 506-526; these read VIST…IWFF, NVFF…LHIG, IQYI…GAVG, VMIL…YLFF, IVVF…GYWI, and LLDT…LWPD.

It belongs to the YccS/YhfK family.

It localises to the cell membrane. This is an uncharacterized protein from Haemophilus influenzae (strain ATCC 51907 / DSM 11121 / KW20 / Rd).